The primary structure comprises 149 residues: Putative glycine cleavage system H protein 3 (149 aa).

The Lipoyl-binding domain occupies 39–121; it reads TCTLGITKYA…EDKGWLIKME (83 aa). An N6-lipoyllysine modification is found at Lys80.

It belongs to the GcvH family. In terms of assembly, the glycine cleavage system is composed of four proteins: P, T, L and H. (R)-lipoate is required as a cofactor.

In terms of biological role, the glycine cleavage system catalyzes the degradation of glycine. The H protein shuttles the methylamine group of glycine from the P protein to the T protein. This is Putative glycine cleavage system H protein 3 (gcvH3) from Dictyostelium discoideum (Social amoeba).